Reading from the N-terminus, the 214-residue chain is Probable transaldolase (214 aa).

Lysine 83 functions as the Schiff-base intermediate with substrate in the catalytic mechanism.

The protein belongs to the transaldolase family. Type 3B subfamily.

It is found in the cytoplasm. It catalyses the reaction D-sedoheptulose 7-phosphate + D-glyceraldehyde 3-phosphate = D-erythrose 4-phosphate + beta-D-fructose 6-phosphate. Its pathway is carbohydrate degradation; pentose phosphate pathway; D-glyceraldehyde 3-phosphate and beta-D-fructose 6-phosphate from D-ribose 5-phosphate and D-xylulose 5-phosphate (non-oxidative stage): step 2/3. Its function is as follows. Transaldolase is important for the balance of metabolites in the pentose-phosphate pathway. The sequence is that of Probable transaldolase from Maridesulfovibrio salexigens (strain ATCC 14822 / DSM 2638 / NCIMB 8403 / VKM B-1763) (Desulfovibrio salexigens).